Here is an 85-residue protein sequence, read N- to C-terminus: Large ribosomal subunit protein bL27 (85 aa).

Belongs to the bacterial ribosomal protein bL27 family.

The sequence is that of Large ribosomal subunit protein bL27 from Azobacteroides pseudotrichonymphae genomovar. CFP2.